A 289-amino-acid polypeptide reads, in one-letter code: 33 kDa chaperonin (289 aa).

Cystine bridges form between Cys-229/Cys-231 and Cys-262/Cys-265.

Belongs to the HSP33 family. In terms of processing, under oxidizing conditions two disulfide bonds are formed involving the reactive cysteines. Under reducing conditions zinc is bound to the reactive cysteines and the protein is inactive.

The protein localises to the cytoplasm. Redox regulated molecular chaperone. Protects both thermally unfolding and oxidatively damaged proteins from irreversible aggregation. Plays an important role in the bacterial defense system toward oxidative stress. This chain is 33 kDa chaperonin, found in Pectobacterium carotovorum subsp. carotovorum (strain PC1).